We begin with the raw amino-acid sequence, 705 residues long: Lethal(3)malignant brain tumor-like protein 2 (705 aa).

The tract at residues 1 to 84 (MEKPRSIEET…GTPRSLDGSG (84 aa)) is disordered. Serine 13 carries the phosphoserine modification. The segment covering 15–25 (PMEEEEDDDLE) has biased composition (acidic residues). Over residues 38–49 (SSVGSESSSYLE) the composition is skewed to low complexity. Residues 50–60 (ESSEAENEDRE) are compositionally biased toward acidic residues. Serine 67 carries the post-translational modification Phosphoserine. Residue threonine 76 is modified to Phosphothreonine. The FCS-type zinc-finger motif lies at 81-116 (DGSGSEPAVCEMCGIVGTREAFFSKTKRFCSVSCSR). 4 residues coordinate Zn(2+): cysteine 90, cysteine 93, cysteine 110, and cysteine 114. MBT repeat units lie at residues 179–283 (FDWG…LVPP), 291–391 (TDWK…IKMS), 397–500 (MAHH…LTPP), and 508–604 (FNWE…LQPP). The residue at position 338 (serine 338) is a Phosphoserine. Lysine 405 participates in a covalent cross-link: Glycyl lysine isopeptide (Lys-Gly) (interchain with G-Cter in SUMO2). Positions 608 to 665 (EPATPLKAKEATKKKKKQFGKKRKRIPPTKTRPLRQGSKKPLLEDDPQGARKISSEPV) are disordered. Positions 619–634 (TKKKKKQFGKKRKRIP) are enriched in basic residues. Glycyl lysine isopeptide (Lys-Gly) (interchain with G-Cter in SUMO2) cross-links involve residues lysine 647, lysine 659, and lysine 675. The interval 680 to 705 (DVASPDKASSPELPVSVENIKQETDD) is disordered. 3 positions are modified to phosphoserine: serine 683, serine 688, and serine 689. Lysine 700 is covalently cross-linked (Glycyl lysine isopeptide (Lys-Gly) (interchain with G-Cter in SUMO1); alternate). Lysine 700 is covalently cross-linked (Glycyl lysine isopeptide (Lys-Gly) (interchain with G-Cter in SUMO2); alternate).

Part of the E2F6.com-1 complex in G0 phase composed of E2F6, MGA, MAX, TFDP1, CBX3, BAT8, EUHMTASE1, RING1, RNF2, MBLR, BAT8 and YAF2.

It localises to the nucleus. Its function is as follows. Putative Polycomb group (PcG) protein. PcG proteins maintain the transcriptionally repressive state of genes, probably via a modification of chromatin, rendering it heritably changed in its expressibility. Its association with a chromatin-remodeling complex suggests that it may contribute to prevent expression of genes that trigger the cell into mitosis. Binds to monomethylated and dimethylated 'Lys-20' on histone H4. Binds histone H3 peptides that are monomethylated or dimethylated on 'Lys-4', 'Lys-9' or 'Lys-27'. This Homo sapiens (Human) protein is Lethal(3)malignant brain tumor-like protein 2 (L3MBTL2).